A 215-amino-acid polypeptide reads, in one-letter code: Osmoprotectant import permease protein OsmW (215 aa).

The ABC transmembrane type-1 domain occupies 18–202; the sequence is TFQHLWLVAL…LLAIVLDWLL (185 aa). Transmembrane regions (helical) follow at residues 24–44, 51–73, 78–100, 132–152, 153–173, and 183–203; these read LVAL…VLIV, TPVL…GLMI, LIGH…LLPI, WVEI…AVVM, NIGV…LLLL, and MLIA…WLLH.

The protein belongs to the binding-protein-dependent transport system permease family. As to quaternary structure, the complex is composed of two ATP-binding proteins (OsmV), two transmembrane proteins (OsmW and OsmY) and a solute-binding protein (OsmX).

Its subcellular location is the cell inner membrane. Part of the OsmU ABC transporter complex, which is involved in the uptake of osmoprotectants such as choline-O-sulfate and glycine betaine. Probably responsible for the translocation of the substrate across the membrane. In Salmonella typhimurium (strain LT2 / SGSC1412 / ATCC 700720), this protein is Osmoprotectant import permease protein OsmW (osmW).